The primary structure comprises 218 residues: Glutathione S-transferase Mu 2 (218 aa).

One can recognise a GST N-terminal domain in the interval 2 to 88 (PMTLGYWDIR…YLARKHNLCG (87 aa)). 7–8 (YW) is a binding site for glutathione. Serine 27 and serine 44 each carry phosphoserine. Residues 43 to 46 (RSQW), lysine 50, 59 to 60 (NL), and 72 to 73 (QS) each bind glutathione. Positions 90–208 (TEEERIRVDI…KSSRFLSKPI (119 aa)) constitute a GST C-terminal domain. Tyrosine 116 lines the substrate pocket. A Phosphoserine modification is found at serine 117.

It belongs to the GST superfamily. Mu family. Homodimer.

It is found in the cytoplasm. It carries out the reaction RX + glutathione = an S-substituted glutathione + a halide anion + H(+). The catalysed reaction is 11(S)-hydroxy-14(S),15(S)-epoxy-(5Z,8Z,12E)-eicosatrienoate + glutathione = (11S,15S)-dihydroxy-14(R)-S-glutathionyl-(5Z,8Z,12E)-eicosatrienoate. Functionally, conjugation of reduced glutathione to a wide number of exogenous and endogenous hydrophobic electrophiles. Participates in the formation of novel hepoxilin regioisomers. This chain is Glutathione S-transferase Mu 2, found in Mus musculus (Mouse).